Consider the following 42-residue polypeptide: Large ribosomal subunit protein bL36 (42 aa).

The protein belongs to the bacterial ribosomal protein bL36 family.

This Wolbachia pipientis subsp. Culex pipiens (strain wPip) protein is Large ribosomal subunit protein bL36.